We begin with the raw amino-acid sequence, 137 residues long: Ribosomal RNA large subunit methyltransferase H (137 aa).

Residues Leu56, Gly85, and 104 to 109 (LSPLTL) contribute to the S-adenosyl-L-methionine site.

The protein belongs to the RNA methyltransferase RlmH family. Homodimer.

It localises to the cytoplasm. It catalyses the reaction pseudouridine(1915) in 23S rRNA + S-adenosyl-L-methionine = N(3)-methylpseudouridine(1915) in 23S rRNA + S-adenosyl-L-homocysteine + H(+). Specifically methylates the pseudouridine at position 1915 (m3Psi1915) in 23S rRNA. This chain is Ribosomal RNA large subunit methyltransferase H, found in Thermus thermophilus (strain ATCC BAA-163 / DSM 7039 / HB27).